Reading from the N-terminus, the 365-residue chain is Transcription elongation factor, mitochondrial (365 aa).

The N-terminal 40 residues, 1 to 40 (MAWRANLACLIKAGGRTRWFPLPEYLSMSPVLHNTCSRRK), are a transit peptide targeting the mitochondrion.

Belongs to the TEFM family. As to quaternary structure, interacts with POLRMT.

It localises to the mitochondrion matrix. Its subcellular location is the mitochondrion nucleoid. In terms of biological role, transcription elongation factor which increases mitochondrial RNA polymerase processivity. Regulates transcription of the mitochondrial genome, including genes important for the oxidative phosphorylation machinery. This Rattus norvegicus (Rat) protein is Transcription elongation factor, mitochondrial (Tefm).